We begin with the raw amino-acid sequence, 235 residues long: Purine nucleoside phosphorylase DeoD-type (235 aa).

His-4 contributes to the a purine D-ribonucleoside binding site. Phosphate contacts are provided by residues Gly-20, Arg-24, Arg-43, and 87–90 (RVGT). Residues Glu-162, 179–181 (EME), and 203–204 (SD) each bind a purine D-ribonucleoside. The Proton donor role is filled by Asp-204.

Belongs to the PNP/UDP phosphorylase family. Homohexamer; trimer of homodimers.

The enzyme catalyses a purine D-ribonucleoside + phosphate = a purine nucleobase + alpha-D-ribose 1-phosphate. It catalyses the reaction a purine 2'-deoxy-D-ribonucleoside + phosphate = a purine nucleobase + 2-deoxy-alpha-D-ribose 1-phosphate. Functionally, catalyzes the reversible phosphorolytic breakdown of the N-glycosidic bond in the beta-(deoxy)ribonucleoside molecules, with the formation of the corresponding free purine bases and pentose-1-phosphate. The chain is Purine nucleoside phosphorylase DeoD-type from Bacillus cereus (strain ZK / E33L).